The chain runs to 316 residues: Phosphate acyltransferase (316 aa).

Belongs to the PlsX family. Homodimer. Probably interacts with PlsY.

It localises to the cytoplasm. The enzyme catalyses a fatty acyl-[ACP] + phosphate = an acyl phosphate + holo-[ACP]. Its pathway is lipid metabolism; phospholipid metabolism. Catalyzes the reversible formation of acyl-phosphate (acyl-PO(4)) from acyl-[acyl-carrier-protein] (acyl-ACP). This enzyme utilizes acyl-ACP as fatty acyl donor, but not acyl-CoA. The sequence is that of Phosphate acyltransferase from Chlamydia caviae (strain ATCC VR-813 / DSM 19441 / 03DC25 / GPIC) (Chlamydophila caviae).